Here is a 356-residue protein sequence, read N- to C-terminus: UDP-N-acetylglucosamine--N-acetylmuramyl-(pentapeptide) pyrophosphoryl-undecaprenol N-acetylglucosamine transferase (356 aa).

Positions 195 and 287 each coordinate UDP-N-acetyl-alpha-D-glucosamine.

This sequence belongs to the glycosyltransferase 28 family. MurG subfamily.

The protein resides in the cell membrane. It catalyses the reaction Mur2Ac(oyl-L-Ala-gamma-D-Glu-L-Lys-D-Ala-D-Ala)-di-trans,octa-cis-undecaprenyl diphosphate + UDP-N-acetyl-alpha-D-glucosamine = beta-D-GlcNAc-(1-&gt;4)-Mur2Ac(oyl-L-Ala-gamma-D-Glu-L-Lys-D-Ala-D-Ala)-di-trans,octa-cis-undecaprenyl diphosphate + UDP + H(+). It functions in the pathway cell wall biogenesis; peptidoglycan biosynthesis. In terms of biological role, cell wall formation. Catalyzes the transfer of a GlcNAc subunit on undecaprenyl-pyrophosphoryl-MurNAc-pentapeptide (lipid intermediate I) to form undecaprenyl-pyrophosphoryl-MurNAc-(pentapeptide)GlcNAc (lipid intermediate II). The polypeptide is UDP-N-acetylglucosamine--N-acetylmuramyl-(pentapeptide) pyrophosphoryl-undecaprenol N-acetylglucosamine transferase (Streptococcus sanguinis (strain SK36)).